Consider the following 772-residue polypeptide: Rho guanine nucleotide exchange factor 6 (772 aa).

The Calponin-homology (CH) domain occupies 1 to 111; sequence MNPEERVVTW…TLLAVNKATE (111 aa). The interval 115–158 is disordered; sequence SERPCGRSSSLSATTSSQTNPQAAVPSTTPEQQSEEKAAEMTEN. Positions 122–133 are enriched in low complexity; the sequence is SSSLSATTSSQT. Serine 126 carries the post-translational modification Phosphoserine. Position 133 is a phosphothreonine (threonine 133). A compositionally biased stretch (polar residues) spans 134-146; the sequence is NPQAAVPSTTPEQ. The SH3 domain occupies 160 to 219; sequence SHQLIVKARFNFKQTNEDELSVCKGDIIYVTRVEEGGWWEGTLNGRTGWFPSNYVREIKP. Serine 225 is subject to Phosphoserine. The DH domain occupies 241–421; the sequence is YYTVVLQNIL…KSLMGQCQDL (181 aa). A PH domain is found at 443–548; the sequence is DIKTLGNVIF…WMEQLNRLTK (106 aa). Serine 488 is subject to Phosphoserine. The segment covering 557-573 has biased composition (low complexity); it reads SKTSSSSCSTHSSFSST. The tract at residues 557–581 is disordered; it reads SKTSSSSCSTHSSFSSTGQPRGPLE. Phosphoserine occurs at positions 640 and 680.

As to quaternary structure, interacts with PAK kinases through the SH3 domain. Interacts with GIT1. Interacts with PARVB. Component of cytoplasmic complexes, which also contain PXN, GIT1 and PAK1. Interacts with BIN2. Identified in a complex with BIN2 and GIT2. Interacts with PARVG; the guanine nucleotide exchange factor activity of ARHGEF6 is essential for PARVG-induced enhancement of cell spreading.

It localises to the cell projection. Its subcellular location is the lamellipodium. In terms of biological role, acts as a RAC1 guanine nucleotide exchange factor (GEF). This is Rho guanine nucleotide exchange factor 6 (Arhgef6) from Rattus norvegicus (Rat).